The sequence spans 298 residues: Protoheme IX farnesyltransferase (298 aa).

Helical transmembrane passes span 26-46 (VVSL…PGAV), 52-72 (IFGT…NCLV), 93-113 (VSVP…LFML), 120-140 (LTMW…TVIL), 148-168 (IVIG…AVTG), 174-194 (ALLL…ALAL), 219-239 (LHVL…YLTQ), 241-261 (SGLI…YYAI), and 278-298 (YSIA…YFYF).

This sequence belongs to the UbiA prenyltransferase family. Protoheme IX farnesyltransferase subfamily.

It is found in the cell inner membrane. It catalyses the reaction heme b + (2E,6E)-farnesyl diphosphate + H2O = Fe(II)-heme o + diphosphate. The protein operates within porphyrin-containing compound metabolism; heme O biosynthesis; heme O from protoheme: step 1/1. Converts heme B (protoheme IX) to heme O by substitution of the vinyl group on carbon 2 of heme B porphyrin ring with a hydroxyethyl farnesyl side group. This Nitrosomonas europaea (strain ATCC 19718 / CIP 103999 / KCTC 2705 / NBRC 14298) protein is Protoheme IX farnesyltransferase.